The primary structure comprises 532 residues: Cytochrome c oxidase subunit 1 (532 aa).

The next 3 membrane-spanning stretches (helical) occupy residues 1 to 21 (MWDYVKLVALGVVAAIAAYAA), 27 to 47 (LPYMVNMVEVALAAVIALIWV), and 69 to 89 (GVIATTFWGIVGFLVAVVIAF). His-114 contributes to the heme b binding site. Helical transmembrane passes span 115 to 135 (TSAVIFAFGGNALIASAFYVV), 143 to 163 (LFGGTALGWFVFWGWQLIIVT), 185 to 205 (LDILVAVVWVAYLIAFLGTIF), 212 to 232 (IYVANWFYLSFIVTIAMLHIV), 263 to 283 (GHNAVGFFLTAGFLGMMYYFV), 296 to 316 (LSIVHFWALIFLYIWAGPHHL), 328 to 348 (LGMVMSVILWMPSWGGMINGL), and 366 to 386 (MMVVSIGFYGMSTFEGPMMSI). The Cu cation site is built by His-264, His-314, and His-315. Heme b-binding residues include His-402 and His-404. The next 3 helical transmembrane spans lie at 403–423 (VHSGALGWNGMITFGMLYFLT), 442–462 (FWLATIGIVLYASAMWVTGIM), and 496–516 (VGGVLYLLGGLIMAYNLWATV).

It belongs to the heme-copper respiratory oxidase family. It depends on Cu(2+) as a cofactor. Heme b serves as cofactor.

It localises to the cell membrane. The enzyme catalyses 4 Fe(II)-[cytochrome c] + O2 + 8 H(+)(in) = 4 Fe(III)-[cytochrome c] + 2 H2O + 4 H(+)(out). The protein operates within energy metabolism; oxidative phosphorylation. Cytochrome c oxidase is the component of the respiratory chain that catalyzes the reduction of oxygen to water. Subunits 1-3 form the functional core of the enzyme complex. Co I is the catalytic subunit of the enzyme. Electrons originating in cytochrome c are transferred via the copper A center of subunit 2 and heme a of subunit 1 to the bimetallic center formed by heme a3 and copper B. This cytochrome c oxidase shows proton pump activity across the membrane in addition to the electron transfer. The protein is Cytochrome c oxidase subunit 1 (ctaD) of Rhodobacter capsulatus (Rhodopseudomonas capsulata).